Here is a 223-residue protein sequence, read N- to C-terminus: Putative lipoprotein NMB1126/NMB1164 (223 aa).

The N-terminal stretch at Met1 to Gly19 is a signal peptide. A lipid anchor (N-palmitoyl cysteine) is attached at Cys20. Cys20 is lipidated: S-diacylglycerol cysteine.

The protein resides in the cell membrane. This is Putative lipoprotein NMB1126/NMB1164 from Neisseria meningitidis serogroup B (strain ATCC BAA-335 / MC58).